A 428-amino-acid chain; its full sequence is Type II methyltransferase M.TthHB8I (428 aa).

A disordered region spans residues arginine 407–phenylalanine 428.

This sequence belongs to the N(4)/N(6)-methyltransferase family.

It carries out the reaction a 2'-deoxyadenosine in DNA + S-adenosyl-L-methionine = an N(6)-methyl-2'-deoxyadenosine in DNA + S-adenosyl-L-homocysteine + H(+). A gamma subtype methylase, recognizes the double-stranded sequence 5'-TCGA-3', methylates A-4 on both strands and protects the DNA from cleavage by the TthHB8I endonuclease. This chain is Type II methyltransferase M.TthHB8I, found in Thermus thermophilus (strain ATCC 27634 / DSM 579 / HB8).